We begin with the raw amino-acid sequence, 1556 residues long: Lysine-specific demethylase 5C (1556 aa).

The JmjN domain maps to 14 to 55 (CPVFEPSWAEFRDPLGYIAKIRPIAEKSGICKIRPPADWQPP). The ARID domain maps to 79–169 (TRVKLNYLDQ…IVYPYEMYQS (91 aa)). The segment covering 197-207 (LRQSVQPSKFN) has biased composition (polar residues). The tract at residues 197–227 (LRQSVQPSKFNSYGRRAKRLQPDPEPTEEDI) is disordered. Residues Lys205, Lys229, Lys244, and Lys274 each participate in a glycyl lysine isopeptide (Lys-Gly) (interchain with G-Cter in SUMO2) cross-link. Positions 257 to 303 (LRKKDKEGPECPPTVVVKEESGGDVKVESTSPKTFLESKEELSHSPE) are disordered. The span at 273 to 283 (VKEESGGDVKV) shows a compositional bias: basic and acidic residues. Ser287 bears the Phosphoserine mark. Lys295 participates in a covalent cross-link: Glycyl lysine isopeptide (Lys-Gly) (interchain with G-Cter in SUMO2). Residues Ser301 and Ser317 each carry the phosphoserine modification. The PHD-type 1 zinc finger occupies 324-374 (SYVCRMCSRGDEDDKLLLCDGCDDNYHIFCLLPPLPEIPKGVWRCPKCVMA). In terms of domain architecture, JmjC spans 468-634 (EYATSGWNLN…AGRQCIEHYR (167 aa)). Positions 514, 517, and 602 each coordinate Fe cation. Ser893 and Ser897 each carry phosphoserine. Lys1127 participates in a covalent cross-link: Glycyl lysine isopeptide (Lys-Gly) (interchain with G-Cter in SUMO2). The PHD-type 2 zinc-finger motif lies at 1185–1250 (TSVCVCGQVP…KFLCPLCMRS (66 aa)). 2 disordered regions span residues 1315 to 1362 (LQAE…SPEK) and 1441 to 1556 (ERHG…QQQL). Residues 1335–1345 (PLREGSGKDMP) show a composition bias toward basic and acidic residues. Ser1359 carries the post-translational modification Phosphoserine. Positions 1445–1460 (SRARGRALERRRRRKV) are enriched in basic residues. Residues 1461-1478 (DRGGEGDDPAREELEPKR) show a composition bias toward basic and acidic residues. Over residues 1485–1500 (EAEEAQEEEELEEETG) the composition is skewed to acidic residues. Composition is skewed to polar residues over residues 1513 to 1522 (SPSTQENQNG) and 1530 to 1540 (SGPSAPFSTLS). The segment covering 1541–1556 (PQLHVPCPQQPPQQQL) has biased composition (low complexity).

It belongs to the JARID1 histone demethylase family. In terms of assembly, part of two distinct complexes, one containing E2F6, and the other containing REST. Interacts with ZMYND8. Fe(2+) is required as a cofactor.

The protein resides in the nucleus. The catalysed reaction is N(6),N(6),N(6)-trimethyl-L-lysyl(4)-[histone H3] + 3 2-oxoglutarate + 3 O2 = L-lysyl(4)-[histone H3] + 3 formaldehyde + 3 succinate + 3 CO2. In terms of biological role, histone demethylase that specifically demethylates 'Lys-4' of histone H3, thereby playing a central role in histone code. Does not demethylate histone H3 'Lys-9', H3 'Lys-27', H3 'Lys-36', H3 'Lys-79' or H4 'Lys-20'. Demethylates trimethylated and dimethylated but not monomethylated H3 'Lys-4'. Participates in transcriptional repression of neuronal genes by recruiting histone deacetylases and REST at neuron-restrictive silencer elements. Represses the CLOCK-BMAL1 heterodimer-mediated transcriptional activation of the core clock component PER2. This Canis lupus familiaris (Dog) protein is Lysine-specific demethylase 5C (KDM5C).